The chain runs to 152 residues: Actin-related protein 2/3 complex subunit 5-B (152 aa).

Residues 21–44 (NKFVDDQLQEEPAEPQGPDEAEVD) are disordered. Positions 27–43 (QLQEEPAEPQGPDEAEV) are enriched in acidic residues.

It belongs to the ARPC5 family. In terms of assembly, component of the Arp2/3 complex composed of actr2/arp2, actr3/arp3, arpc1 (arpc1a or arpc1b), arpc2, arpc3, arpc4 and arpc5.

The protein localises to the cytoplasm. It localises to the cytoskeleton. It is found in the cell projection. The protein resides in the nucleus. Its function is as follows. Component of the Arp2/3 complex, a multiprotein complex that mediates actin polymerization upon stimulation by nucleation-promoting factor (NPF). The Arp2/3 complex mediates the formation of branched actin networks in the cytoplasm, providing the force for cell motility. In addition to its role in the cytoplasmic cytoskeleton, the Arp2/3 complex also promotes actin polymerization in the nucleus, thereby regulating gene transcription and repair of damaged DNA. The Arp2/3 complex promotes homologous recombination (HR) repair in response to DNA damage by promoting nuclear actin polymerization, leading to drive motility of double-strand breaks (DSBs). The polypeptide is Actin-related protein 2/3 complex subunit 5-B (arpc5-b) (Xenopus laevis (African clawed frog)).